Reading from the N-terminus, the 269-residue chain is Protein OPG079 (269 aa).

Belongs to the orthopoxvirus OPG079 family. In terms of assembly, homoomultimer (Potential). Interacts with the small subunit of ribonucleotide reductase. Interacts with host FAM111A; this interaction protomtes OPG079 degradation through autophagy.

It localises to the host cytoplasm. In terms of biological role, plays an essential role in viral DNA replication. Binds to ssDNA with high affinity and localizes to cytoplasmic factories where nascent viral genomes accumulate. May disrupt loops, hairpins and other secondary structures present on ssDNA to reduce and eliminate pausing of viral DNA polymerase at specific sites during elongation. This Bos taurus (Bovine) protein is Protein OPG079 (OPG079).